Here is a 340-residue protein sequence, read N- to C-terminus: MQSIPIKNVGTDNISQLIDRFERQYVYLRLSITDVCNFRCNYCLPDGYKPPSHKQQFLSVSEIQRVVRAFADLGTEKVRITGGEPTLRKDFLEIAHTVSQTNGIKKVALTTNGYRMERDIDLWQQAGITDINVSVDSLDTRQFQLITGENKLQSILKGIDRAFEIGYRKIKVNAVLMKQYTAPELDKFLVWIKDKPIQMRFIELMETGEMDSFFQAQHLSGQSVMQRLLQEGWQLQPKALSDGPAKVLSHPDYQGEIGLIMPYEKNFCASCNRLRVSALGKLHLCLFGEEGIDLRDLLSEDTQQAQLEARLKAALQGKREHHYLHIGDSGIRNNLASIGG.

Residues 20–246 (RFERQYVYLR…PKALSDGPAK (227 aa)) form the Radical SAM core domain. R29 provides a ligand contact to GTP. [4Fe-4S] cluster-binding residues include C36 and C40. Residue Y42 coordinates S-adenosyl-L-methionine. Residue C43 coordinates [4Fe-4S] cluster. R79 lines the GTP pocket. S-adenosyl-L-methionine is bound at residue G83. T110 contributes to the GTP binding site. An S-adenosyl-L-methionine-binding site is contributed by S134. K171 contacts GTP. An S-adenosyl-L-methionine-binding site is contributed by M205. C268 and C271 together coordinate [4Fe-4S] cluster. 273-275 (RLR) serves as a coordination point for GTP. Residue C285 coordinates [4Fe-4S] cluster.

This sequence belongs to the radical SAM superfamily. MoaA family. Monomer and homodimer. Requires [4Fe-4S] cluster as cofactor.

The enzyme catalyses GTP + AH2 + S-adenosyl-L-methionine = (8S)-3',8-cyclo-7,8-dihydroguanosine 5'-triphosphate + 5'-deoxyadenosine + L-methionine + A + H(+). Its pathway is cofactor biosynthesis; molybdopterin biosynthesis. Functionally, catalyzes the cyclization of GTP to (8S)-3',8-cyclo-7,8-dihydroguanosine 5'-triphosphate. The polypeptide is GTP 3',8-cyclase (Actinobacillus pleuropneumoniae serotype 3 (strain JL03)).